A 525-amino-acid polypeptide reads, in one-letter code: Chromaffin granule amine transporter (525 aa).

Over 1-21 (MLRTILDAPQRLLKEGRASRQ) the chain is Cytoplasmic. A helical transmembrane segment spans residues 22–42 (LVLVVVFVALLLDNMLFTVVV). Residues 43–138 (PIVPTFLYDM…TGFLEEEITR (96 aa)) are Lumenal, vesicle-facing. 3 N-linked (GlcNAc...) asparagine glycosylation sites follow: asparagine 58, asparagine 87, and asparagine 104. Residues 139–158 (VGVLFASKAVMQLLVNPFVG) form a helical membrane-spanning segment. Topologically, residues 159-167 (PLTNRIGYH) are cytoplasmic. A helical transmembrane segment spans residues 168–188 (IPMFAGFVIMFLSTVMFAFSG). The Lumenal, vesicle portion of the chain corresponds to 189–197 (TYTLLFVAR). A helical transmembrane segment spans residues 198-218 (TLQGIGSSFSSVAGLGMLASV). The Cytoplasmic segment spans residues 219-227 (YTDDHERGR). The helical transmembrane segment at 228–250 (AMGTALGGLALGLLVGAPFGSVM) threads the bilayer. Residues 251 to 256 (YEFVGK) are Lumenal, vesicle-facing. Residues 257-279 (SAPFLILAFLALLDGALQLCILQ) form a helical membrane-spanning segment. The Cytoplasmic segment spans residues 280–299 (PSKVSPESAKGTPLFMLLKD). A helical membrane pass occupies residues 300–319 (PYILVAAGSICFANMGVAIL). The Lumenal, vesicle segment spans residues 320–335 (EPTLPIWMMQTMCSPK). A helical membrane pass occupies residues 336–360 (WQLGLAFLPASVSYLIGTNLFGVLA). Residues 361 to 365 (NKMGR) lie on the Cytoplasmic side of the membrane. Residues 366–386 (WLCSLIGMLVVGTSLLCVPLA) traverse the membrane as a helical segment. Residues 387–397 (HNIFGLIGPNA) lie on the Lumenal, vesicle side of the membrane. The helical transmembrane segment at 398 to 418 (GLGLAIGMVDSSMMPIMGHLV) threads the bilayer. Over 419–422 (DLRH) the chain is Cytoplasmic. Residues 423–443 (TSVYGSVYAIADVAFCMGFAI) traverse the membrane as a helical segment. The Lumenal, vesicle portion of the chain corresponds to 444–448 (GPSTG). Residues 449 to 470 (GAIVKAIGFPWLMVITGVINIV) traverse the membrane as a helical segment. The Cytoplasmic segment spans residues 471 to 525 (YAPLCYYLRSPPAKEEKLAILSQDCPMETRMYATQKPTKEFPLGEDSDEEPDHEE). Residues 503–525 (ATQKPTKEFPLGEDSDEEPDHEE) are disordered. Acidic residues predominate over residues 513-525 (LGEDSDEEPDHEE).

This sequence belongs to the major facilitator superfamily. Vesicular transporter family. As to expression, expressed primarily in neuroendocrine tissues. Highly expressed in chromaffin cells of the adrenal medulla (at protein level). Detected in peripheral sympathetic ganglia (at protein level). Found in some paracrine cells in stomach and duodenum (at protein level). Expressed in substantia nigra. In terms of tissue distribution, expressed in gastrointestinal tract.

The protein resides in the cytoplasmic vesicle. It is found in the secretory vesicle membrane. Its subcellular location is the secretory vesicle. It localises to the synaptic vesicle membrane. The protein localises to the endoplasmic reticulum membrane. The enzyme catalyses serotonin(in) + 2 H(+)(out) = serotonin(out) + 2 H(+)(in). It carries out the reaction (R)-noradrenaline(in) + 2 H(+)(out) = (R)-noradrenaline(out) + 2 H(+)(in). It catalyses the reaction dopamine(in) + 2 H(+)(out) = dopamine(out) + 2 H(+)(in). Strongly inhibited by reserpine. Also inhibited to a lesser extent by ketanserin and fenfluramine. Not significantly inhibited by tetrabenazine. Electrogenic antiporter that exchanges one cationic monoamine with two intravesicular protons across the membrane of secretory and synaptic vesicles. Uses the electrochemical proton gradient established by the V-type proton-pump ATPase to accumulate high concentrations of monoamines inside the vesicles prior to their release via exocytosis. Transports catecholamines and indolamines with higher affinity for serotonin. Regulates the transvesicular monoaminergic gradient that determines the quantal size. Mediates presynaptic monoaminergic vesicle transport in the amygdala and prefrontal brain regions related with emotion processing in response to environmental stimuli. Its function is as follows. Unable to uptake serotonin. In Homo sapiens (Human), this protein is Chromaffin granule amine transporter (SLC18A1).